The primary structure comprises 298 residues: MAAIAFIGLGQMGSPMASNLLQQGHQLRVFDVNAEAVRHLVDKGATPAANPAQAAKDAEFIITMLPNGDLVRNVLFGENGVCEGLSTDALVIDMSTIHPLQTDKLIADMQAKGFSMMDVPVGRTSANAITGTLLLLAGGTAEQVERATPILMAMGSELINAGGPGMGIRVKLINNYMSIALNALSAEAAVLCEALNLPFDVAVKVMSGTAAGKGHFTTSWPNKVLSGDLSPAFMIDLAHKDLGIALDVANQLHVPMPLGAASREVYSQARAAGRGRQDWSAILEQVRVSAGMTAKVKM.

Residues 11–12 (QM), Asp-31, Leu-65, and Thr-96 each bind NAD(+). A 2,3-dihydroxypropane-1-sulfonate-binding site is contributed by Arg-123. Residue Lys-171 is part of the active site. A 2,3-dihydroxypropane-1-sulfonate-binding site is contributed by 174-178 (NNYMS). Lys-240 serves as a coordination point for NAD(+).

This sequence belongs to the HIBADH-related family. 3-sulfolactaldehyde reductase subfamily. In terms of assembly, homotetramer. Dimer of dimers.

It carries out the reaction (2S)-3-sulfopropanediol + NAD(+) = (2S)-3-sulfolactaldehyde + NADH + H(+). The enzyme catalyses 4-hydroxybutanoate + NAD(+) = succinate semialdehyde + NADH + H(+). With respect to regulation, inhibited by the NADH analogs tetrahydro-NADH and hexahydro-NADH. In terms of biological role, reduces 3-sulfolactaldehyde (SLA) to 2,3-dihydroxypropane 1-sulfonate (DHPS). Metabolite profiling studies showed that the enzyme also catalyzes in vitro the NADH-dependent reduction of succinic semialdehyde (SSA) to 4-hydroxybutyrate (GHB), and that it could be involved in the metabolism of SSA, and other potentially toxic intermediates that may accumulate under stress conditions. However, the enzyme exhibits a 42,000-fold greater catalytic efficiency for the reduction of SLA over SSA. Shows no detectable activity on the analogous glycolytic intermediate glyceraldehyde-3-phosphate. This chain is 3-sulfolactaldehyde reductase (yihU), found in Escherichia coli (strain K12).